Here is a 202-residue protein sequence, read N- to C-terminus: Nucleoside triphosphate pyrophosphatase (202 aa).

D79 serves as the catalytic Proton acceptor.

Belongs to the Maf family. The cofactor is a divalent metal cation.

It is found in the cytoplasm. The catalysed reaction is a ribonucleoside 5'-triphosphate + H2O = a ribonucleoside 5'-phosphate + diphosphate + H(+). It catalyses the reaction a 2'-deoxyribonucleoside 5'-triphosphate + H2O = a 2'-deoxyribonucleoside 5'-phosphate + diphosphate + H(+). Its function is as follows. Nucleoside triphosphate pyrophosphatase. May have a dual role in cell division arrest and in preventing the incorporation of modified nucleotides into cellular nucleic acids. The sequence is that of Nucleoside triphosphate pyrophosphatase from Rhodopseudomonas palustris (strain BisB5).